A 298-amino-acid polypeptide reads, in one-letter code: Iron-regulated virulence regulatory protein IrgB (298 aa).

An HTH lysR-type domain is found at 1-59 (MQDLSAVKAFHALCQHKSLTAAAKALEQPKSTLSRRLAQLEEDLGQSLLMRQGNRLTLT). Positions 19-38 (LTAAAKALEQPKSTLSRRLA) form a DNA-binding region, H-T-H motif.

It belongs to the LysR transcriptional regulatory family.

Transcription activation of the irgA gene. In the presence of sufficient iron, transcription of both irgA and irgB is negatively regulated by a fur-like protein. In low iron conditions, negative regulation of transcription is removed, and production of irgB leads to positive transcriptional activation of irgA. This is Iron-regulated virulence regulatory protein IrgB (irgB) from Vibrio cholerae serotype O1 (strain ATCC 39315 / El Tor Inaba N16961).